A 140-amino-acid chain; its full sequence is Hexon-interlacing protein (140 aa).

A coiled-coil region spans residues 100-127 (LTALLAQLDSLTRELNVVSQQLLDLRQQ).

It belongs to the adenoviridae hexon-interlacing protein family. In terms of assembly, homotrimer. Interacts with hexon protein; this interaction tethers the hexons together. Self-interacts with adjacent proteins. Interacts with kinesin light chain KLC1; this interaction leads to capsid disruption at the nuclear pore complex during virus entry into host cell.

It is found in the virion. The protein localises to the host nucleus. Structural component of the virion that acts as a cement protein on the capsid exterior and forms triskelion structures consisting of three molecules that stabilize three hexon trimers at the center of each icosahedral facet and fixes the peripentonal hexons. Dispensable for assembly. During virus entry, recruits the anterograde motor kinesin-1 to the capsid docked at the nuclear pore complex thereby subjecting the docked capsid to a pulling force. The resulting tension leads to capsid disruption, dispersion of capsid fragments toward cell periphery and eventually viral DNA entry into the host nucleus. This Human adenovirus C serotype 5 (HAdV-5) protein is Hexon-interlacing protein.